We begin with the raw amino-acid sequence, 220 residues long: Thiopurine S-methyltransferase (220 aa).

Residues Trp10, Leu45, Glu66, and Arg123 each contribute to the S-adenosyl-L-methionine site.

The protein belongs to the class I-like SAM-binding methyltransferase superfamily. TPMT family.

It localises to the cytoplasm. It carries out the reaction S-adenosyl-L-methionine + a thiopurine = S-adenosyl-L-homocysteine + a thiopurine S-methylether.. The protein is Thiopurine S-methyltransferase of Pseudomonas syringae pv. tomato (strain ATCC BAA-871 / DC3000).